Consider the following 417-residue polypeptide: Inactive cytochrome P450 76AD1 (417 aa).

A helical membrane pass occupies residues 4-24 (ATLAMILAIWFISFHFIKLLF).

The protein belongs to the cytochrome P450 family.

The protein localises to the membrane. It participates in pigment biosynthesis; betalain biosynthesis. In terms of biological role, inactive cytochrome unable to convert L-DOPA to cyclo-DOPA in the betalain pathway and producing a yellow mutant phenotype. A frameshift replaces 108 amino acids of the active protein found in red beets (AC I3PFJ5) with 27 new residues followed by a stop codon. The sequence is that of Inactive cytochrome P450 76AD1 from Beta vulgaris (Sugar beet).